A 185-amino-acid polypeptide reads, in one-letter code: Probable RNA polymerase sigma-C factor (185 aa).

The Polymerase core binding motif lies at 52 to 65 (DLTQETFLRAIGAI). The segment at residues 149 to 168 (YADAAAVCGCPVGTIRSRVA) is a DNA-binding region (H-T-H motif).

Belongs to the sigma-70 factor family. ECF subfamily.

In terms of biological role, sigma factors are initiation factors that promote the attachment of RNA polymerase to specific initiation sites and are then released. The sequence is that of Probable RNA polymerase sigma-C factor (sigC) from Mycobacterium bovis (strain ATCC BAA-935 / AF2122/97).